The sequence spans 602 residues: Phosphoenolpyruvate carboxykinase [GTP] (602 aa).

Substrate is bound by residues R89 and 211-213 (YAG). K220 and H239 together coordinate Mn(2+). Residue S260 participates in substrate binding. 261-266 (GSGKTS) provides a ligand contact to GTP. The active site involves S262. D277 is a binding site for Mn(2+). Substrate is bound at residue 367 to 369 (NAR). GTP-binding residues include R369 and R400.

Belongs to the phosphoenolpyruvate carboxykinase [GTP] family. Requires Mn(2+) as cofactor.

Its subcellular location is the cytoplasm. The catalysed reaction is oxaloacetate + GTP = phosphoenolpyruvate + GDP + CO2. Its pathway is carbohydrate biosynthesis; gluconeogenesis. In terms of biological role, catalyzes the conversion of oxaloacetate (OAA) to phosphoenolpyruvate (PEP), the rate-limiting step in the metabolic pathway that produces glucose from lactate and other precursors derived from the citric acid cycle. The sequence is that of Phosphoenolpyruvate carboxykinase [GTP] from Sulfurisphaera tokodaii (strain DSM 16993 / JCM 10545 / NBRC 100140 / 7) (Sulfolobus tokodaii).